We begin with the raw amino-acid sequence, 314 residues long: Porphobilinogen deaminase (314 aa).

An S-(dipyrrolylmethanemethyl)cysteine modification is found at Cys-234.

Belongs to the HMBS family. In terms of assembly, monomer. Dipyrromethane serves as cofactor.

The catalysed reaction is 4 porphobilinogen + H2O = hydroxymethylbilane + 4 NH4(+). It participates in porphyrin-containing compound metabolism; protoporphyrin-IX biosynthesis; coproporphyrinogen-III from 5-aminolevulinate: step 2/4. Tetrapolymerization of the monopyrrole PBG into the hydroxymethylbilane pre-uroporphyrinogen in several discrete steps. This is Porphobilinogen deaminase from Mycobacterium ulcerans (strain Agy99).